The primary structure comprises 114 residues: Putative neurotoxin 7 (114 aa).

This sequence belongs to the scolopendra neurotoxin 8 family. Contains 3 disulfide bonds. As to expression, expressed by the venom gland.

Its subcellular location is the secreted. The chain is Putative neurotoxin 7 from Scolopendra mutilans (Chinese red-headed centipede).